Reading from the N-terminus, the 186-residue chain is Phosphoheptose isomerase (186 aa).

The region spanning 33-186 is the SIS domain; that stretch reads LCECLKKGGK…TLCQIIDEGF (154 aa). Position 48 to 50 (48 to 50) interacts with substrate; that stretch reads NGG. The Zn(2+) site is built by histidine 57 and glutamate 61. Residues glutamate 61, 90-91, 116-118, serine 121, and glutamine 168 contribute to the substrate site; these read ND and STS. Residues glutamine 168 and histidine 176 each coordinate Zn(2+).

Belongs to the SIS family. GmhA subfamily. Homotetramer. Requires Zn(2+) as cofactor.

It is found in the cytoplasm. It catalyses the reaction 2 D-sedoheptulose 7-phosphate = D-glycero-alpha-D-manno-heptose 7-phosphate + D-glycero-beta-D-manno-heptose 7-phosphate. The protein operates within carbohydrate biosynthesis; D-glycero-D-manno-heptose 7-phosphate biosynthesis; D-glycero-alpha-D-manno-heptose 7-phosphate and D-glycero-beta-D-manno-heptose 7-phosphate from sedoheptulose 7-phosphate: step 1/1. Catalyzes the isomerization of sedoheptulose 7-phosphate in D-glycero-D-manno-heptose 7-phosphate. This chain is Phosphoheptose isomerase, found in Campylobacter jejuni subsp. jejuni serotype O:6 (strain 81116 / NCTC 11828).